The chain runs to 299 residues: GTPase Era (299 aa).

Positions 4-171 (KSGFVAILGR…VDILSENLEE (168 aa)) constitute an Era-type G domain. The tract at residues 12 to 19 (GRPNVGKS) is G1. 12–19 (GRPNVGKS) contacts GTP. Positions 38–42 (QTTRN) are G2. The tract at residues 59–62 (DTPG) is G3. Residues 59 to 63 (DTPGI) and 121 to 124 (NKID) contribute to the GTP site. The G4 stretch occupies residues 121–124 (NKID). Residues 150–152 (ISA) form a G5 region. Positions 202-280 (TREEIPHSVA…FLETWVKVKK (79 aa)) constitute a KH type-2 domain.

Belongs to the TRAFAC class TrmE-Era-EngA-EngB-Septin-like GTPase superfamily. Era GTPase family. Monomer.

It is found in the cytoplasm. It localises to the cell membrane. In terms of biological role, an essential GTPase that binds both GDP and GTP, with rapid nucleotide exchange. Plays a role in 16S rRNA processing and 30S ribosomal subunit biogenesis and possibly also in cell cycle regulation and energy metabolism. This is GTPase Era from Streptococcus gordonii (strain Challis / ATCC 35105 / BCRC 15272 / CH1 / DL1 / V288).